Consider the following 419-residue polypeptide: Zinc metalloproteinase-disintegrin-like atrolysin-A (419 aa).

The 197-residue stretch at 6–202 (RYVELVIVAD…YNPQCILNEP (197 aa)) folds into the Peptidase M12B domain. Glutamate 9 is a binding site for Ca(2+). An N-linked (GlcNAc...) asparagine glycan is attached at asparagine 72. Residue aspartate 93 coordinates Ca(2+). 3 disulfide bridges follow: cysteine 117-cysteine 197, cysteine 157-cysteine 181, and cysteine 159-cysteine 164. A Zn(2+)-binding site is contributed by histidine 142. The active site involves glutamate 143. Zn(2+) contacts are provided by histidine 146 and histidine 152. Cysteine 197, asparagine 200, valine 212, asparagine 215, leucine 217, glutamate 219, glutamate 222, and aspartate 225 together coordinate Ca(2+). In terms of domain architecture, Disintegrin spans 210-296 (PPVCGNELLE…DCPTDDFHRN (87 aa)). Intrachain disulfides connect cysteine 213–cysteine 242, cysteine 224–cysteine 237, cysteine 226–cysteine 232, cysteine 236–cysteine 259, cysteine 250–cysteine 256, cysteine 255–cysteine 281, cysteine 268–cysteine 288, cysteine 275–cysteine 307, cysteine 300–cysteine 312, cysteine 319–cysteine 369, cysteine 334–cysteine 376, cysteine 347–cysteine 357, cysteine 364–cysteine 398, and cysteine 392–cysteine 403. The D/ECD-tripeptide motif lies at 274 to 276 (ECD). Residues asparagine 326, asparagine 338, and asparagine 342 are each glycosylated (N-linked (GlcNAc...) asparagine).

Belongs to the venom metalloproteinase (M12B) family. P-III subfamily. P-IIIa sub-subfamily. Monomer. It depends on Zn(2+) as a cofactor. In terms of tissue distribution, expressed by the venom gland.

The protein localises to the secreted. The enzyme catalyses Cleavage of 3-Asn-|-Gln-4, 5-His-|-Leu-6, 10-His-|-Leu-11, 14-Ala-|-Leu-15 and 16-Tyr-|-Leu-17 in insulin B chain. Removes C-terminal Leu from small peptides.. Functionally, snake venom zinc metalloproteinase-disintegrin that causes hemorrhage by provoking the degradation of the sub-endothelial matrix proteins (fibronectin, laminin, type IV collagen, nidogen, and gelatins) and disturbances in platelet function. The recombinant cysteine-rich domain interacts with the alpha-2/beta-1 integrin (ITGA2/ITGB1) (collagen receptor), and inhibits the platelet aggregation induced by collagen. In Crotalus atrox (Western diamondback rattlesnake), this protein is Zinc metalloproteinase-disintegrin-like atrolysin-A.